Consider the following 418-residue polypeptide: Serine--tRNA ligase (418 aa).

Residue 232-234 coordinates L-serine; that stretch reads TAE. ATP is bound by residues 263–265 and valine 279; that span reads RRE. Residue glutamate 286 participates in L-serine binding. 350–353 provides a ligand contact to ATP; the sequence is EISS. Serine 385 provides a ligand contact to L-serine.

It belongs to the class-II aminoacyl-tRNA synthetase family. Type-1 seryl-tRNA synthetase subfamily. In terms of assembly, homodimer. The tRNA molecule binds across the dimer.

It is found in the cytoplasm. It catalyses the reaction tRNA(Ser) + L-serine + ATP = L-seryl-tRNA(Ser) + AMP + diphosphate + H(+). It carries out the reaction tRNA(Sec) + L-serine + ATP = L-seryl-tRNA(Sec) + AMP + diphosphate + H(+). It participates in aminoacyl-tRNA biosynthesis; selenocysteinyl-tRNA(Sec) biosynthesis; L-seryl-tRNA(Sec) from L-serine and tRNA(Sec): step 1/1. Its function is as follows. Catalyzes the attachment of serine to tRNA(Ser). Is also able to aminoacylate tRNA(Sec) with serine, to form the misacylated tRNA L-seryl-tRNA(Sec), which will be further converted into selenocysteinyl-tRNA(Sec). In Leptospira biflexa serovar Patoc (strain Patoc 1 / Ames), this protein is Serine--tRNA ligase.